Consider the following 248-residue polypeptide: 2,3-bisphosphoglycerate-dependent phosphoglycerate mutase (248 aa).

Substrate contacts are provided by residues 8 to 15 (RHGESEWN), 21 to 22 (TG), R60, 87 to 90 (ERHY), K98, 114 to 115 (RR), and 183 to 184 (GN). H9 serves as the catalytic Tele-phosphohistidine intermediate. E87 functions as the Proton donor/acceptor in the catalytic mechanism.

This sequence belongs to the phosphoglycerate mutase family. BPG-dependent PGAM subfamily.

It carries out the reaction (2R)-2-phosphoglycerate = (2R)-3-phosphoglycerate. It functions in the pathway carbohydrate degradation; glycolysis; pyruvate from D-glyceraldehyde 3-phosphate: step 3/5. Its function is as follows. Catalyzes the interconversion of 2-phosphoglycerate and 3-phosphoglycerate. The polypeptide is 2,3-bisphosphoglycerate-dependent phosphoglycerate mutase (Coprothermobacter proteolyticus (strain ATCC 35245 / DSM 5265 / OCM 4 / BT)).